Reading from the N-terminus, the 177-residue chain is Large ribosomal subunit protein uL6 (177 aa).

This sequence belongs to the universal ribosomal protein uL6 family. As to quaternary structure, part of the 50S ribosomal subunit.

This protein binds to the 23S rRNA, and is important in its secondary structure. It is located near the subunit interface in the base of the L7/L12 stalk, and near the tRNA binding site of the peptidyltransferase center. This Afipia carboxidovorans (strain ATCC 49405 / DSM 1227 / KCTC 32145 / OM5) (Oligotropha carboxidovorans) protein is Large ribosomal subunit protein uL6.